Reading from the N-terminus, the 421-residue chain is Gamma-glutamyl phosphate reductase (421 aa).

It belongs to the gamma-glutamyl phosphate reductase family.

It is found in the cytoplasm. It carries out the reaction L-glutamate 5-semialdehyde + phosphate + NADP(+) = L-glutamyl 5-phosphate + NADPH + H(+). The protein operates within amino-acid biosynthesis; L-proline biosynthesis; L-glutamate 5-semialdehyde from L-glutamate: step 2/2. Its function is as follows. Catalyzes the NADPH-dependent reduction of L-glutamate 5-phosphate into L-glutamate 5-semialdehyde and phosphate. The product spontaneously undergoes cyclization to form 1-pyrroline-5-carboxylate. The sequence is that of Gamma-glutamyl phosphate reductase from Pseudomonas savastanoi pv. phaseolicola (strain 1448A / Race 6) (Pseudomonas syringae pv. phaseolicola (strain 1448A / Race 6)).